Reading from the N-terminus, the 82-residue chain is ATP synthase subunit c, chloroplastic (82 aa).

Transmembrane regions (helical) follow at residues 3 to 23 (PIVA…AAIG) and 57 to 77 (FAFM…LLFA).

This sequence belongs to the ATPase C chain family. In terms of assembly, F-type ATPases have 2 components, F(1) - the catalytic core - and F(0) - the membrane proton channel. F(1) has five subunits: alpha(3), beta(3), gamma(1), delta(1), epsilon(1). F(0) has four main subunits: a(1), b(1), b'(1) and c(10-14). The alpha and beta chains form an alternating ring which encloses part of the gamma chain. F(1) is attached to F(0) by a central stalk formed by the gamma and epsilon chains, while a peripheral stalk is formed by the delta, b and b' chains.

It localises to the plastid. The protein resides in the chloroplast thylakoid membrane. F(1)F(0) ATP synthase produces ATP from ADP in the presence of a proton or sodium gradient. F-type ATPases consist of two structural domains, F(1) containing the extramembraneous catalytic core and F(0) containing the membrane proton channel, linked together by a central stalk and a peripheral stalk. During catalysis, ATP synthesis in the catalytic domain of F(1) is coupled via a rotary mechanism of the central stalk subunits to proton translocation. Its function is as follows. Key component of the F(0) channel; it plays a direct role in translocation across the membrane. A homomeric c-ring of between 10-14 subunits forms the central stalk rotor element with the F(1) delta and epsilon subunits. The sequence is that of ATP synthase subunit c, chloroplastic from Chlorella vulgaris (Green alga).